Consider the following 886-residue polypeptide: Kinesin-like protein KIF18A (886 aa).

The Kinesin motor domain maps to arginine 11–isoleucine 355. Residue lysine 24 forms a Glycyl lysine isopeptide (Lys-Gly) (interchain with G-Cter in SUMO2) linkage. ATP is bound at residue glycine 113–threonine 120. Residues isoleucine 370 to asparagine 404 are a coiled coil. Serine 674 carries the post-translational modification Phosphoserine. Residue lysine 683 forms a Glycyl lysine isopeptide (Lys-Gly) (interchain with G-Cter in SUMO2) linkage. Residue serine 695 is modified to Phosphoserine. The segment at glutamate 774–glycine 804 is disordered. Residue lysine 782 forms a Glycyl lysine isopeptide (Lys-Gly) (interchain with G-Cter in SUMO2) linkage. Serine 826 carries the post-translational modification Phosphoserine. Lysine 862 is covalently cross-linked (Glycyl lysine isopeptide (Lys-Gly) (interchain with G-Cter in SUMO2)). Residues lysine 862–glutamine 886 are disordered.

Belongs to the TRAFAC class myosin-kinesin ATPase superfamily. Kinesin family. In terms of assembly, interacts with CENPE and ESR1. In terms of processing, glycosylated. Ubiquitinated.

The protein localises to the cell projection. It localises to the ruffle. It is found in the cytoplasm. Its subcellular location is the nucleus. The protein resides in the cytoskeleton. The protein localises to the microtubule organizing center. It localises to the centrosome. In terms of biological role, microtubule-depolymerizing kinesin which plays a role in chromosome congression by reducing the amplitude of preanaphase oscillations and slowing poleward movement during anaphase, thus suppressing chromosome movements. May stabilize the CENPE-BUB1B complex at the kinetochores during early mitosis and maintains CENPE levels at kinetochores during chromosome congression. The protein is Kinesin-like protein KIF18A (Kif18a) of Mus musculus (Mouse).